The sequence spans 231 residues: Isoprenyl transferase (231 aa).

Asp-14 is an active-site residue. Asp-14 serves as a coordination point for Mg(2+). Substrate contacts are provided by residues 15–18, Trp-19, Arg-27, His-31, and 59–61; these read GNGR and STE. The active-site Proton acceptor is the Asn-62. Residues Trp-63, Arg-65, Arg-176, and 182 to 184 each bind substrate; that span reads RIS. Position 195 (Glu-195) interacts with Mg(2+).

The protein belongs to the UPP synthase family. In terms of assembly, homodimer. Mg(2+) is required as a cofactor.

Functionally, catalyzes the condensation of isopentenyl diphosphate (IPP) with allylic pyrophosphates generating different type of terpenoids. The sequence is that of Isoprenyl transferase from Aquifex aeolicus (strain VF5).